The chain runs to 244 residues: uncharacterized protein (244 aa).

This is an uncharacterized protein from Saccharomyces cerevisiae (strain ATCC 204508 / S288c) (Baker's yeast).